We begin with the raw amino-acid sequence, 416 residues long: Adenylosuccinate synthetase (416 aa).

GTP is bound by residues 13–19 (GDEGKGK) and 41–43 (GHT). Residue D14 is the Proton acceptor of the active site. D14 and G41 together coordinate Mg(2+). Residues 14–17 (DEGK), 39–42 (NAGH), T126, R140, Q220, T235, and R299 contribute to the IMP site. H42 functions as the Proton donor in the catalytic mechanism. A substrate-binding site is contributed by 295–301 (VSTGRKR). GTP is bound by residues R301, 327 to 329 (KLD), and 405 to 407 (STS).

The protein belongs to the adenylosuccinate synthetase family. As to quaternary structure, homodimer. It depends on Mg(2+) as a cofactor.

Its subcellular location is the cytoplasm. It catalyses the reaction IMP + L-aspartate + GTP = N(6)-(1,2-dicarboxyethyl)-AMP + GDP + phosphate + 2 H(+). It functions in the pathway purine metabolism; AMP biosynthesis via de novo pathway; AMP from IMP: step 1/2. Functionally, plays an important role in the de novo pathway of purine nucleotide biosynthesis. Catalyzes the first committed step in the biosynthesis of AMP from IMP. In Campylobacter jejuni subsp. jejuni serotype O:6 (strain 81116 / NCTC 11828), this protein is Adenylosuccinate synthetase.